The primary structure comprises 93 residues: UPF0147 protein MJ1419 (93 aa).

It belongs to the UPF0147 family.

The polypeptide is UPF0147 protein MJ1419 (Methanocaldococcus jannaschii (strain ATCC 43067 / DSM 2661 / JAL-1 / JCM 10045 / NBRC 100440) (Methanococcus jannaschii)).